The chain runs to 511 residues: Cobyric acid synthase (511 aa).

Residues 251–443 form the GATase cobBQ-type domain; that stretch reads LLDIAIICLP…IHGIFDNDVF (193 aa). C332 acts as the Nucleophile in catalysis. H435 is a catalytic residue.

It belongs to the CobB/CobQ family. CobQ subfamily.

The protein operates within cofactor biosynthesis; adenosylcobalamin biosynthesis. Its function is as follows. Catalyzes amidations at positions B, D, E, and G on adenosylcobyrinic A,C-diamide. NH(2) groups are provided by glutamine, and one molecule of ATP is hydrogenolyzed for each amidation. This chain is Cobyric acid synthase, found in Listeria monocytogenes serovar 1/2a (strain ATCC BAA-679 / EGD-e).